Consider the following 113-residue polypeptide: Hydrogenase maturation factor HypA (113 aa).

Position 2 (histidine 2) interacts with Ni(2+). 4 residues coordinate Zn(2+): cysteine 73, cysteine 76, cysteine 89, and cysteine 92.

It belongs to the HypA/HybF family.

Its function is as follows. Involved in the maturation of [NiFe] hydrogenases. Required for nickel insertion into the metal center of the hydrogenase. This is Hydrogenase maturation factor HypA from Chlorobaculum tepidum (strain ATCC 49652 / DSM 12025 / NBRC 103806 / TLS) (Chlorobium tepidum).